We begin with the raw amino-acid sequence, 271 residues long: Formamidopyrimidine-DNA glycosylase (271 aa).

Proline 2 serves as the catalytic Schiff-base intermediate with DNA. The active-site Proton donor is glutamate 3. The active-site Proton donor; for beta-elimination activity is lysine 58. Histidine 91, arginine 110, and arginine 152 together coordinate DNA. Residues 237-271 (SIYGKKGRPCPKCGSAIRMMRLGGRSTFFCPLCQK) form an FPG-type zinc finger. The active-site Proton donor; for delta-elimination activity is the arginine 261.

Belongs to the FPG family. Monomer. The cofactor is Zn(2+).

The catalysed reaction is Hydrolysis of DNA containing ring-opened 7-methylguanine residues, releasing 2,6-diamino-4-hydroxy-5-(N-methyl)formamidopyrimidine.. The enzyme catalyses 2'-deoxyribonucleotide-(2'-deoxyribose 5'-phosphate)-2'-deoxyribonucleotide-DNA = a 3'-end 2'-deoxyribonucleotide-(2,3-dehydro-2,3-deoxyribose 5'-phosphate)-DNA + a 5'-end 5'-phospho-2'-deoxyribonucleoside-DNA + H(+). Its function is as follows. Involved in base excision repair of DNA damaged by oxidation or by mutagenic agents. Acts as a DNA glycosylase that recognizes and removes damaged bases. Has a preference for oxidized purines, such as 7,8-dihydro-8-oxoguanine (8-oxoG). Has AP (apurinic/apyrimidinic) lyase activity and introduces nicks in the DNA strand. Cleaves the DNA backbone by beta-delta elimination to generate a single-strand break at the site of the removed base with both 3'- and 5'-phosphates. The protein is Formamidopyrimidine-DNA glycosylase of Geotalea daltonii (strain DSM 22248 / JCM 15807 / FRC-32) (Geobacter daltonii).